A 406-amino-acid chain; its full sequence is 4-O-methyl-glucuronoyl methylesterase (406 aa).

The first 17 residues, 1 to 17 (MAFRWLSFLLLALPVLA), serve as a signal peptide directing secretion. A disulfide bond links Cys-31 and Cys-64. 4 N-linked (GlcNAc...) asparagine glycosylation sites follow: Asn-100, Asn-110, Asn-122, and Asn-178. Positions 215-220 (GCSRDG) match the GXSYXG catalytic site motif motif. 2 cysteine pairs are disulfide-bonded: Cys-216-Cys-352 and Cys-248-Cys-324. Catalysis depends on Ser-217, which acts as the Nucleophile. Substrate contacts are provided by Lys-221, Gln-263, and Glu-271. Residue Asn-285 is glycosylated (N-linked (GlcNAc...) asparagine). Trp-315 contributes to the substrate binding site. Asn-348 carries an N-linked (GlcNAc...) asparagine glycan. The active-site Proton donor/acceptor is the His-351. N-linked (GlcNAc...) asparagine glycans are attached at residues Asn-376, Asn-387, and Asn-398.

It belongs to the carbohydrate esterase 15 (CE15) family.

The protein localises to the secreted. The catalysed reaction is a 4-O-methyl-alpha-D-glucuronosyl ester derivative + H2O = 4-O-methyl-alpha-D-glucuronate derivative + an alcohol + H(+). Glucuronoyl esterase which may play a significant role in biomass degradation, as it is considered to disconnect hemicellulose from lignin through the hydrolysis of the ester bond between 4-O-methyl-D-glucuronic acid residues of glucuronoxylans and aromatic alcohols of lignin. The sequence is that of 4-O-methyl-glucuronoyl methylesterase from Phanerochaete carnosa (strain HHB-10118-sp) (White-rot fungus).